The chain runs to 222 residues: Probable nicotinate-nucleotide adenylyltransferase (222 aa).

It belongs to the NadD family.

It catalyses the reaction nicotinate beta-D-ribonucleotide + ATP + H(+) = deamido-NAD(+) + diphosphate. It functions in the pathway cofactor biosynthesis; NAD(+) biosynthesis; deamido-NAD(+) from nicotinate D-ribonucleotide: step 1/1. Functionally, catalyzes the reversible adenylation of nicotinate mononucleotide (NaMN) to nicotinic acid adenine dinucleotide (NaAD). This chain is Probable nicotinate-nucleotide adenylyltransferase, found in Xylella fastidiosa (strain M23).